A 240-amino-acid chain; its full sequence is Transcription factor bHLH101 (240 aa).

Residues 65–117 enclose the bHLH domain; the sequence is EKKLNHNASERDRRRKLNALYSSLRALLPLSDQKRKLSIPMTVARVVKYIPEQ.

Homodimer. Flowers.

It localises to the nucleus. The protein is Transcription factor bHLH101 (BHLH101) of Arabidopsis thaliana (Mouse-ear cress).